Consider the following 429-residue polypeptide: MLIGYILGDGTLKIKVLKGFKDILPGEVELWQQVEKITRDIFTRHNFSEIRMPILEQTDLFARSIGEATDIVEKEMYTFVDKKVTMRPEATASLIRAYIENGLYVAKPVQRLFTIGPMFRHERPQKGRLRQFHQMDIEVLGSVNPLVDAELMAMGSMVFRTLGINVRLEMNSLGCPECRPVYRQALVEFIEDRFEHLCDDCKRRSKTNPLRVLDCKNAGCRAQVEEAPSILDYLCGDCADHFDTVCTTLESLEIPYSLNKFMVRGLDYYCRTTFEFITDDLGAQSAVGAGGRYDGLVEKLGGPVGMPGIGFAIGMERLILLLQQKETEFVAEKLDLFVIGLGDAATKLACILSQDLRGLGVGVAVDYEGRSLKAQMKLANKAGVAATLILGENEIETGKAVLKNMDSQEQCEVALVAGDIFAALAMSAQ.

It belongs to the class-II aminoacyl-tRNA synthetase family. In terms of assembly, homodimer.

The protein resides in the cytoplasm. It catalyses the reaction tRNA(His) + L-histidine + ATP = L-histidyl-tRNA(His) + AMP + diphosphate + H(+). In Desulfotalea psychrophila (strain LSv54 / DSM 12343), this protein is Histidine--tRNA ligase.